A 461-amino-acid chain; its full sequence is Squalene synthase BSS (461 aa).

NADP(+) is bound by residues Arg51 and Arg76. Mg(2+) is bound by residues Asp79, Glu82, and Asp83. Positions 219, 322, and 324 each coordinate NADP(+). The helical transmembrane segment at 430 to 450 (VTQHWWSILIFLISIAVFFIP) threads the bilayer.

The protein belongs to the phytoene/squalene synthase family. Mg(2+) serves as cofactor.

It localises to the endoplasmic reticulum membrane. It catalyses the reaction 2 (2E,6E)-farnesyl diphosphate + NADPH + H(+) = squalene + 2 diphosphate + NADP(+). It carries out the reaction 2 (2E,6E)-farnesyl diphosphate + NADH + H(+) = squalene + 2 diphosphate + NAD(+). In terms of biological role, converts farnesyl diphosphate (FPP) into squalene, a precursor for sterol biosynthesis in eukaryotes. Does not possess botryococcene synthase activity. This chain is Squalene synthase BSS, found in Botryococcus braunii (Green alga).